Reading from the N-terminus, the 1150-residue chain is Rho-type GTPase-activating protein 1 (1150 aa).

A compositionally biased stretch (basic and acidic residues) spans 1–10 (MSQRDAKKDG). A disordered region spans residues 1–78 (MSQRDAKKDG…AESRKALPNQ (78 aa)). Residues 40–62 (TTKNFPHSRHTSTVAGTEGGSSL) are compositionally biased toward polar residues. LIM zinc-binding domains lie at 114–177 (KICA…RRLD), 178–238 (LLCA…LFAA), and 483–546 (DLCY…SSNV). Residues 586–683 (SQRKPLSVDP…SHGGSITGKS (98 aa)) form a disordered region. A compositionally biased stretch (polar residues) spans 598–617 (ENVSSTVETAKQAETTASSD). Positions 642–655 (SNETQSSSNSTETS) are enriched in low complexity. Serine 690 is subject to Phosphoserine. Positions 726–759 (AFRHMPSYTDPSYRKNSGAIYDKNDGTQKGLTPK) are disordered. The Rho-GAP domain maps to 837-1038 (VPLEILVERN…LLIENFEKFC (202 aa)). 2 disordered regions span residues 1078-1097 (LDERNTPKHTASTKRKRQPI) and 1104-1150 (LTSD…IRDS). The segment covering 1088–1097 (ASTKRKRQPI) has biased composition (basic residues). Residues 1104 to 1134 (LTSDVPSGSEVADTNSLSSTTKDEASPNSDA) show a composition bias toward polar residues.

It localises to the cell tip. The protein resides in the nucleus. In terms of biological role, GTPase-activating protein for Rho1. Involved in the F-actin patch localization, cell morphogenesis, regulation of septation, and cell wall synthesis. The chain is Rho-type GTPase-activating protein 1 (rga1) from Schizosaccharomyces pombe (strain 972 / ATCC 24843) (Fission yeast).